Reading from the N-terminus, the 577-residue chain is Sulfite reductase [NADPH] hemoprotein beta-component (577 aa).

The [4Fe-4S] cluster site is built by Cys-436, Cys-442, Cys-481, and Cys-485. A siroheme-binding site is contributed by Cys-485.

This sequence belongs to the nitrite and sulfite reductase 4Fe-4S domain family. As to quaternary structure, alpha(8)-beta(8). The alpha component is a flavoprotein, the beta component is a hemoprotein. Siroheme serves as cofactor. [4Fe-4S] cluster is required as a cofactor.

It catalyses the reaction hydrogen sulfide + 3 NADP(+) + 3 H2O = sulfite + 3 NADPH + 4 H(+). It participates in sulfur metabolism; hydrogen sulfide biosynthesis; hydrogen sulfide from sulfite (NADPH route): step 1/1. Component of the sulfite reductase complex that catalyzes the 6-electron reduction of sulfite to sulfide. This is one of several activities required for the biosynthesis of L-cysteine from sulfate. This chain is Sulfite reductase [NADPH] hemoprotein beta-component, found in Shewanella woodyi (strain ATCC 51908 / MS32).